The sequence spans 208 residues: Small ribosomal subunit protein uS4 (208 aa).

The S4 RNA-binding domain occupies 98–161 (RRLDNVIYRL…RKMPVIAEAQ (64 aa)).

It belongs to the universal ribosomal protein uS4 family. Part of the 30S ribosomal subunit. Contacts protein S5. The interaction surface between S4 and S5 is involved in control of translational fidelity.

Functionally, one of the primary rRNA binding proteins, it binds directly to 16S rRNA where it nucleates assembly of the body of the 30S subunit. Its function is as follows. With S5 and S12 plays an important role in translational accuracy. This chain is Small ribosomal subunit protein uS4, found in Oleidesulfovibrio alaskensis (strain ATCC BAA-1058 / DSM 17464 / G20) (Desulfovibrio alaskensis).